A 231-amino-acid polypeptide reads, in one-letter code: Probable pseudouridine-5'-phosphatase (231 aa).

The active-site Nucleophile is the D15. Residues D15 and D17 each contribute to the Mg(2+) site. D17 (proton donor) is an active-site residue.

Belongs to the HAD-like hydrolase superfamily. CbbY/CbbZ/Gph/YieH family. Mg(2+) is required as a cofactor.

The enzyme catalyses psi-UMP + H2O = pseudouridine + phosphate. Its function is as follows. Dephosphorylates pseudouridine 5'-phosphate, a potential intermediate in rRNA degradation. In Drosophila melanogaster (Fruit fly), this protein is Probable pseudouridine-5'-phosphatase (Gs1l).